Reading from the N-terminus, the 141-residue chain is Nucleoside triphosphatase NudI (141 aa).

The region spanning 1–141 (MRQRTIVCPL…RKTLRLKGLL (141 aa)) is the Nudix hydrolase domain. The Nudix box signature appears at 38–59 (GGVEPGERIEEALRREIREELG).

Belongs to the Nudix hydrolase family. NudI subfamily. As to quaternary structure, monomer. The cofactor is Mg(2+).

It carries out the reaction a ribonucleoside 5'-triphosphate + H2O = a ribonucleoside 5'-phosphate + diphosphate + H(+). The enzyme catalyses a 2'-deoxyribonucleoside 5'-triphosphate + H2O = a 2'-deoxyribonucleoside 5'-phosphate + diphosphate + H(+). It catalyses the reaction dUTP + H2O = dUMP + diphosphate + H(+). The catalysed reaction is dTTP + H2O = dTMP + diphosphate + H(+). It carries out the reaction dCTP + H2O = dCMP + diphosphate + H(+). Its function is as follows. Catalyzes the hydrolysis of nucleoside triphosphates, with a preference for pyrimidine deoxynucleoside triphosphates (dUTP, dTTP and dCTP). This chain is Nucleoside triphosphatase NudI, found in Escherichia coli O6:K15:H31 (strain 536 / UPEC).